The sequence spans 1188 residues: Probable phosphoenolpyruvate synthase (1188 aa).

The region spanning 536–670 is the DOD-type homing endonuclease domain; it reads LGGAVLSDGH…LIVGLYRLGI (135 aa). The Tele-phosphohistidine intermediate role is filled by histidine 824. 7 residues coordinate substrate: arginine 917, arginine 964, glutamate 1061, glycine 1083, threonine 1084, asparagine 1085, and aspartate 1086. A Mg(2+)-binding site is contributed by glutamate 1061. A Mg(2+)-binding site is contributed by aspartate 1086. The Proton donor role is filled by cysteine 1133.

It belongs to the PEP-utilizing enzyme family. Mg(2+) serves as cofactor. In terms of processing, this protein undergoes a protein self splicing that involves a post-translational excision of the intervening region (intein) followed by peptide ligation.

The enzyme catalyses pyruvate + ATP + H2O = phosphoenolpyruvate + AMP + phosphate + 2 H(+). It functions in the pathway carbohydrate biosynthesis; gluconeogenesis. In terms of biological role, catalyzes the phosphorylation of pyruvate to phosphoenolpyruvate. This chain is Probable phosphoenolpyruvate synthase (ppsA), found in Methanocaldococcus jannaschii (strain ATCC 43067 / DSM 2661 / JAL-1 / JCM 10045 / NBRC 100440) (Methanococcus jannaschii).